Consider the following 332-residue polypeptide: MMKKPVVIGLAVVVLAAVVAGGYWWYQSRQDNGLTLYGNVDIRTVNLSFRVGGRVESLAVDEGDAIKAGQVLGELDHKPYEIALMQAKAGVSVAQAQYDLMLAGYRDEEIAQAAAAVKQAQAAYDYAQNFYNRQQGLWKSRTISANDLENARSSRDQAQATLKSAQDKLRQYRSGNREQDIAQAKASLEQAQAQLAQAELNLQDSTLIAPSDGTLLTRAVEPGTVLNEGGTVFTVSLTRPVWVRAYVDERNLDQAQPGRKVLLYTDGRPDKPYHGQIGFVSPTAEFTPKTVETPDLRTDLVYRLRIVVTDADDALRQGMPVTVQFGNEAGHE.

Positions 1-16 (MMKKPVVIGLAVVVLA) are cleaved as a signal peptide. Positions 108-209 (EEIAQAAAAV…LNLQDSTLIA (102 aa)) form a coiled coil.

The protein belongs to the UPF0194 family.

The protein localises to the periplasm. This is UPF0194 membrane protein YbhG from Escherichia coli (strain 55989 / EAEC).